We begin with the raw amino-acid sequence, 368 residues long: Zinc finger protein 24 (368 aa).

A Glycyl lysine isopeptide (Lys-Gly) (interchain with G-Cter in SUMO2) cross-link involves residue K22. K27 is covalently cross-linked (Glycyl lysine isopeptide (Lys-Gly) (interchain with G-Cter in SUMO1); alternate). A Glycyl lysine isopeptide (Lys-Gly) (interchain with G-Cter in SUMO2); alternate cross-link involves residue K27. Residues 52–134 (RQRFRQFGYQ…TVLEDLESEL (83 aa)) form the SCAN box domain. S132 and S142 each carry phosphoserine. Glycyl lysine isopeptide (Lys-Gly) (interchain with G-Cter in SUMO2) cross-links involve residues K147, K177, and K236. The C2H2-type 1 zinc-finger motif lies at 251–273 (HICDECGKHFSQGSALILHQRIH). Residues 251-301 (HICDECGKHFSQGSALILHQRIHSGEKPYGCVECGKAFSRSSILVQHQRVH) form a necessary and sufficient for nuclear localization region. S274 carries the phosphoserine modification. Residues K277 and K286 each participate in a glycyl lysine isopeptide (Lys-Gly) (interchain with G-Cter in SUMO2) cross-link. C2H2-type zinc fingers lie at residues 279-301 (YGCV…QRVH), 307-329 (YKCL…QRIH), and 335-357 (YECV…QRRH). Residue S292 is modified to Phosphoserine. Position 335 is a phosphotyrosine (Y335). Glycyl lysine isopeptide (Lys-Gly) (interchain with G-Cter in SUMO2) cross-links involve residues K361 and K367.

The protein belongs to the krueppel C2H2-type zinc-finger protein family. In terms of processing, sumoylated.

The protein localises to the nucleus. In terms of biological role, transcription factor required for myelination of differentiated oligodendrocytes. Required for the conversion of oligodendrocytes from the premyelinating to the myelinating state. In the developing central nervous system (CNS), involved in the maintenance in the progenitor stage by promoting the cell cycle. Specifically binds to the 5'-TCAT-3' DNA sequence. Has transcription repressor activity in vitro. The polypeptide is Zinc finger protein 24 (ZNF24) (Pongo abelii (Sumatran orangutan)).